Reading from the N-terminus, the 172-residue chain is Large ribosomal subunit protein uL10 (172 aa).

The protein belongs to the universal ribosomal protein uL10 family. As to quaternary structure, part of the ribosomal stalk of the 50S ribosomal subunit. The N-terminus interacts with L11 and the large rRNA to form the base of the stalk. The C-terminus forms an elongated spine to which L12 dimers bind in a sequential fashion forming a multimeric L10(L12)X complex.

Functionally, forms part of the ribosomal stalk, playing a central role in the interaction of the ribosome with GTP-bound translation factors. The sequence is that of Large ribosomal subunit protein uL10 from Acidothermus cellulolyticus (strain ATCC 43068 / DSM 8971 / 11B).